We begin with the raw amino-acid sequence, 184 residues long: dCTP deaminase (184 aa).

DCTP contacts are provided by residues 107–112 (KSTYAR), 131–133 (TLE), glutamine 152, tyrosine 166, and glutamine 176. Glutamate 133 (proton donor/acceptor) is an active-site residue.

This sequence belongs to the dCTP deaminase family. As to quaternary structure, homotrimer.

It catalyses the reaction dCTP + H2O + H(+) = dUTP + NH4(+). The protein operates within pyrimidine metabolism; dUMP biosynthesis; dUMP from dCTP (dUTP route): step 1/2. In terms of biological role, catalyzes the deamination of dCTP to dUTP. The chain is dCTP deaminase from Paramagnetospirillum magneticum (strain ATCC 700264 / AMB-1) (Magnetospirillum magneticum).